We begin with the raw amino-acid sequence, 241 residues long: Endonuclease NucS (241 aa).

This sequence belongs to the NucS endonuclease family.

The protein resides in the cytoplasm. Functionally, cleaves both 3' and 5' ssDNA extremities of branched DNA structures. In Corynebacterium jeikeium (strain K411), this protein is Endonuclease NucS.